The primary structure comprises 103 residues: Large ribosomal subunit protein uL24 (103 aa).

It belongs to the universal ribosomal protein uL24 family. In terms of assembly, part of the 50S ribosomal subunit.

In terms of biological role, one of two assembly initiator proteins, it binds directly to the 5'-end of the 23S rRNA, where it nucleates assembly of the 50S subunit. Its function is as follows. One of the proteins that surrounds the polypeptide exit tunnel on the outside of the subunit. The protein is Large ribosomal subunit protein uL24 of Glaesserella parasuis serovar 5 (strain SH0165) (Haemophilus parasuis).